A 481-amino-acid chain; its full sequence is Cobyric acid synthase (481 aa).

One can recognise a GATase cobBQ-type domain in the interval 248–435 (ALTVAWLAFS…LHGMFGADGF (188 aa)). Cysteine 330 functions as the Nucleophile in the catalytic mechanism. Residue histidine 427 is part of the active site.

Belongs to the CobB/CobQ family. CobQ subfamily.

Its pathway is cofactor biosynthesis; adenosylcobalamin biosynthesis. In terms of biological role, catalyzes amidations at positions B, D, E, and G on adenosylcobyrinic A,C-diamide. NH(2) groups are provided by glutamine, and one molecule of ATP is hydrogenolyzed for each amidation. The polypeptide is Cobyric acid synthase (Cereibacter sphaeroides (strain ATCC 17023 / DSM 158 / JCM 6121 / CCUG 31486 / LMG 2827 / NBRC 12203 / NCIMB 8253 / ATH 2.4.1.) (Rhodobacter sphaeroides)).